A 241-amino-acid polypeptide reads, in one-letter code: Ubiquinone biosynthesis O-methyltransferase (241 aa).

The S-adenosyl-L-methionine site is built by Arg-46, Gly-66, Asp-87, and Met-131.

The protein belongs to the methyltransferase superfamily. UbiG/COQ3 family.

The enzyme catalyses a 3-demethylubiquinol + S-adenosyl-L-methionine = a ubiquinol + S-adenosyl-L-homocysteine + H(+). It carries out the reaction a 3-(all-trans-polyprenyl)benzene-1,2-diol + S-adenosyl-L-methionine = a 2-methoxy-6-(all-trans-polyprenyl)phenol + S-adenosyl-L-homocysteine + H(+). It participates in cofactor biosynthesis; ubiquinone biosynthesis. In terms of biological role, O-methyltransferase that catalyzes the 2 O-methylation steps in the ubiquinone biosynthetic pathway. This chain is Ubiquinone biosynthesis O-methyltransferase, found in Bordetella pertussis (strain Tohama I / ATCC BAA-589 / NCTC 13251).